We begin with the raw amino-acid sequence, 117 residues long: uncharacterized protein (117 aa).

This is an uncharacterized protein from Escherichia coli O6:H1 (strain CFT073 / ATCC 700928 / UPEC).